Consider the following 504-residue polypeptide: TGF-beta-activated kinase 1 and MAP3K7-binding protein 1 (504 aa).

Positions 1–22 (MAAQRRSLLQSEQQPSWTDDLP) are disordered. Phosphoserine is present on Ser-7. The span at 7–17 (SLLQSEQQPSW) shows a compositional bias: polar residues. The PPM-type phosphatase domain maps to 28–365 (GVGSASNRSY…EDMTLLVRNF (338 aa)). Ser-378 is subject to Phosphoserine. An O-linked (GlcNAc) serine glycan is attached at Ser-395. Phosphoserine; by MAPK14 is present on Ser-423. A compositionally biased stretch (polar residues) spans 430 to 439 (ATPTLTNQSP). A disordered region spans residues 430–478 (ATPTLTNQSPTLTLQSTNTHTQSSSSSSDGGLFRSRPAHSLPPGEDGRV). At Thr-431 the chain carries Phosphothreonine; by MAPK14. Ser-438 bears the Phosphoserine; by MAPK14 mark. Residues 440-457 (TLTLQSTNTHTQSSSSSS) are compositionally biased toward low complexity. Thr-442 bears the Phosphothreonine mark.

As to quaternary structure, interacts with XIAP and BIRC7. Interacts with TRAF6 and MAP3K7; during IL-1 signaling. Identified in the TRIKA2 complex composed of MAP3K7, TAB1 and TAB2. Interacts with TRAF6 and MAPK14; these interactions allow MAPK14 autophosphorylation. Interacts with STING1; interaction takes place following cGAMP activation and promotes TAB1 recruitment to the endoplasmic reticulum, triggering MAP3K7/TAK1 activation and STING1 phosphorylation. Post-translationally, phosphorylated at all three sites Ser-423, Thr-431 and Ser-438 by MAPK14 when cells were exposed to cellular stresses, or stimulated with TNF-alpha, IL1 or LPS. These phosphorylations inhibit TAK1 activation by a feedback control mechanism. Dephosphorylated by DUSP14 at Ser-438, leading to TAB1-MAP3K7/TAK1 complex inactivation in T-cells. Ubiquitinated by MAP3K1 with 'Lys-63'-linked polyubiquitin; leading to activation of TAK1 and of JNK and p38 MAP kinases following EGF and TGF-beta stimulation. Ubiquitinated by ITCH with 'Lys-48'-linked polyubiquitin; leading to proteasomal degradation. Ubiquitinated by RNF114 during maternal-to-zygotic transition; leading to degradation. In terms of processing, (Microbial infection) Deubiquitinated by Y.enterocolitica YopP. Post-translationally, O-GlcNAcylated at Ser-395 by OGT is required for full MAP3K7/TAK1 activation upon stimulation with IL-1 or osmotic stress. Deglycosylated at Ser-395 by OGA. Ubiquitous.

The protein resides in the cytoplasm. It localises to the cytosol. It is found in the endoplasmic reticulum membrane. Key adapter protein that plays an essential role in JNK and NF-kappa-B activation and proinflammatory cytokines production in response to stimulation with TLRs and cytokines. Mechanistically, associates with the catalytic domain of MAP3K7/TAK1 to trigger MAP3K7/TAK1 autophosphorylation leading to its full activation. Similarly, associates with MAPK14 and triggers its autophosphorylation and subsequent activation. In turn, MAPK14 phosphorylates TAB1 and inhibits MAP3K7/TAK1 activation in a feedback control mechanism. Also plays a role in recruiting MAPK14 to the TAK1 complex for the phosphorylation of the TAB2 and TAB3 regulatory subunits. This Homo sapiens (Human) protein is TGF-beta-activated kinase 1 and MAP3K7-binding protein 1 (TAB1).